The primary structure comprises 551 residues: Formate--tetrahydrofolate ligase (551 aa).

65-72 (TPAGEGKT) contributes to the ATP binding site.

Belongs to the formate--tetrahydrofolate ligase family.

The enzyme catalyses (6S)-5,6,7,8-tetrahydrofolate + formate + ATP = (6R)-10-formyltetrahydrofolate + ADP + phosphate. It functions in the pathway one-carbon metabolism; tetrahydrofolate interconversion. This Thermosipho melanesiensis (strain DSM 12029 / CIP 104789 / BI429) protein is Formate--tetrahydrofolate ligase.